The sequence spans 701 residues: Heterodisulfide reductase subunit A-like protein (701 aa).

152–175 (GGGIAGIFAALDIANAGYKVYLVE) is a binding site for FAD. The 4Fe-4S ferredoxin-type 1 domain occupies 239 to 268 (KQTWVDWDLCTGCGACTDVCPPKARVPDEF). 12 residues coordinate [4Fe-4S] cluster: cysteine 248, cysteine 251, cysteine 254, cysteine 326, cysteine 627, cysteine 630, cysteine 633, cysteine 637, cysteine 660, cysteine 663, cysteine 666, and cysteine 670. 2 consecutive 4Fe-4S ferredoxin-type domains span residues 618–647 (LVSE…MTKY) and 651–680 (MRAE…LHGF).

This sequence belongs to the HdrA family. As to quaternary structure, the heterodisulfide reductase is composed of three subunits; HdlA, HdlB and HdlC. It forms a complex with the F420-non-reducing hydrogenase (Mvh), which provides the reducing equivalents to the heterodisulfide reductase. Requires [4Fe-4S] cluster as cofactor. FAD is required as a cofactor.

It is found in the cytoplasm. In terms of biological role, has oxidoreductase activity. The Hdl and Mvh subunits may together mediate electron transfer from hydrogen to an unidentified electron acceptor on the cytoplasmic side of the membrane. The sequence is that of Heterodisulfide reductase subunit A-like protein (hdlA) from Archaeoglobus profundus (strain DSM 5631 / JCM 9629 / NBRC 100127 / Av18).